Consider the following 96-residue polypeptide: Co-chaperonin GroES (96 aa).

It belongs to the GroES chaperonin family. As to quaternary structure, heptamer of 7 subunits arranged in a ring. Interacts with the chaperonin GroEL.

The protein localises to the cytoplasm. Together with the chaperonin GroEL, plays an essential role in assisting protein folding. The GroEL-GroES system forms a nano-cage that allows encapsulation of the non-native substrate proteins and provides a physical environment optimized to promote and accelerate protein folding. GroES binds to the apical surface of the GroEL ring, thereby capping the opening of the GroEL channel. In Citrifermentans bemidjiense (strain ATCC BAA-1014 / DSM 16622 / JCM 12645 / Bem) (Geobacter bemidjiensis), this protein is Co-chaperonin GroES.